A 915-amino-acid chain; its full sequence is Nitrate reductase [NADH] (915 aa).

The tract at residues 1–102 is disordered; sequence MAASVEPRQP…PRDEGTADAW (102 aa). Positions 16 to 26 are enriched in low complexity; that stretch reads APATAPTARAP. Residues 57 to 71 show a composition bias toward acidic residues; it reads AEEEEDDDDEDDEGH. Over residues 88-97 the composition is skewed to basic and acidic residues; it reads PSTRDPRDEG. Cys-189 is a binding site for Mo-molybdopterin. The Cytochrome b5 heme-binding domain occupies 538–613; the sequence is DKQFTMSEVR…LDTYRIGELI (76 aa). Heme-binding residues include His-573 and His-596. In terms of domain architecture, FAD-binding FR-type spans 654–767; that stretch reads REKVPCRLVD…KGPLGHVEYT (114 aa). FAD-binding positions include 706-709, 723-727, Phe-728, Phe-735, 740-742, Ser-791, and Thr-794; these read RAYT, LVKVY, and LMT.

It belongs to the nitrate reductase family. As to quaternary structure, homodimer. FAD is required as a cofactor. Requires heme as cofactor. The cofactor is Mo-molybdopterin.

It catalyses the reaction nitrite + NAD(+) + H2O = nitrate + NADH + H(+). Nitrate reductase is a key enzyme involved in the first step of nitrate assimilation in plants, fungi and bacteria. This chain is Nitrate reductase [NADH], found in Hordeum vulgare (Barley).